The chain runs to 429 residues: Lysine-specific demethylase JMJ30 (429 aa).

The JmjC domain maps to 272–429 (SSPMEPTYLA…WSNEAESSSS (158 aa)). Residues His-326, Asp-328, and His-405 each contribute to the Fe cation site.

It belongs to the JARID1 histone demethylase family. In terms of assembly, interacts with EFM. Binds to ATXR2, ARF7 and ARF19. The cofactor is Fe(2+). Expressed ubiquitously in vasculatures, roots, rosette leaves, stems, inflorescences and siliques. Mainly present in the root meristem and root differentiation area. Observed at high level in callus.

The protein localises to the nucleus. The protein resides in the cytoplasm. Its subcellular location is the endoplasmic reticulum. It carries out the reaction N(6),N(6),N(6)-trimethyl-L-lysyl(36)-[histone H3] + 2 2-oxoglutarate + 2 O2 = N(6)-methyl-L-lysyl(36)-[histone H3] + 2 formaldehyde + 2 succinate + 2 CO2. The enzyme catalyses N(6),N(6),N(6)-trimethyl-L-lysyl(27)-[histone H3] + 2 2-oxoglutarate + 2 O2 = N(6)-methyl-L-lysyl(27)-[histone H3] + 2 formaldehyde + 2 succinate + 2 CO2. The catalysed reaction is N(6),N(6)-dimethyl-L-lysyl(36)-[histone H3] + 2 2-oxoglutarate + 2 O2 = L-lysyl(36)-[histone H3] + 2 formaldehyde + 2 succinate + 2 CO2. Functionally, histone demethylase that demethylates 'Lys-36' (H3K36me) of histone H3 with a specific activity for H3K36me3 and H3K36me2. Also active on 'Lys-27' (H3K27me) of histone H3 with a specific activity for H3K27me3 and H3K27me2. No activity on H3K36me1 and H3K27me1. Involved in the control of flowering time by demethylating H3K36me2 at the FT locus and repressing its expression. Acts within the central clock and contributes, in parallel with LUX, to temperature compensation, probably as a component of the evening complex, to maintain circadian period at increasing temperatures; this mechanism involves binding to and regulation of CCA1 and PRR7 promoters. Works in concert with TOC1 to promote the morning-phased clock genes CCA1 and LHY which function as components of the central oscillator. Together with JMJ32, regulates the flowering-repressor FLOWERING LOCUS C (FLC) locus by removing the repressive histone modification H3 lysine 27 trimethylation (H3K27me3), especially at elevated temperatures (e.g. 29 degrees Celsius), thus preventing extreme precocious flowering. JMJ30 and JMJ32 are regulators involved in the integration of abscisic acid (ABA) and brassinosteroids (BR) signaling pathways. Together with JMJ32, controls ABA-mediated growth arrest during the post-germination stage in unfavorable conditions, and responses to ABA during root development, via the removal of repressive histone mark (H3K27me3) from the SnRK2.8 promoter, thus promoting SnRK2.8 expression and subsequent kinase-dependent ABI3 activation. In addition, removes the repressive histone marks (H3K27me3) from the BZR1 locus in response to stress and ABA, thus activating the BR signaling pathway which, in turn, inhibits the ABA signaling pathway. Able to drive tissue identity changes to promote callus formation form somatic cells via a massive genome-wide chromatin remodeling (e.g. H3K9me3 demethylation) leading to the induction of Lateral organ Boundaries-Domain (LBD) genes (e.g. LBD16 and LBD29) that establish root primordia; when in complex with ARF proteins (e.g. ARF7 and ARF19), recruits ATXR2 which promotes the deposition of H3K36me3 at LBD genes promoters, thus ensuring their stable activation during callus formation. In Arabidopsis thaliana (Mouse-ear cress), this protein is Lysine-specific demethylase JMJ30.